We begin with the raw amino-acid sequence, 293 residues long: Homoserine kinase (293 aa).

84–94 (PLSRGLGSSSA) lines the ATP pocket.

This sequence belongs to the GHMP kinase family. Homoserine kinase subfamily.

The protein localises to the cytoplasm. It carries out the reaction L-homoserine + ATP = O-phospho-L-homoserine + ADP + H(+). It functions in the pathway amino-acid biosynthesis; L-threonine biosynthesis; L-threonine from L-aspartate: step 4/5. Functionally, catalyzes the ATP-dependent phosphorylation of L-homoserine to L-homoserine phosphate. This Nitratiruptor sp. (strain SB155-2) protein is Homoserine kinase.